We begin with the raw amino-acid sequence, 337 residues long: 4-hydroxyproline 2-epimerase (337 aa).

Cys-91 (proton acceptor) is an active-site residue. Residues 92–93, Asp-252, and 257–258 contribute to the substrate site; these read GH and GT.

The protein belongs to the proline racemase family.

The enzyme catalyses trans-4-hydroxy-L-proline = cis-4-hydroxy-D-proline. Functionally, catalyzes the epimerization of trans-4-hydroxy-L-proline (t4LHyp) to cis-4-hydroxy-D-proline (c4DHyp). Is involved in a degradation pathway that converts t4LHyp to alpha-ketoglutarate, which allows R.sphaeroides to grow on t4LHyp as a sole carbon source. Displays no proline racemase activity. In Cereibacter sphaeroides (strain ATCC 17023 / DSM 158 / JCM 6121 / CCUG 31486 / LMG 2827 / NBRC 12203 / NCIMB 8253 / ATH 2.4.1.) (Rhodobacter sphaeroides), this protein is 4-hydroxyproline 2-epimerase.